Here is a 470-residue protein sequence, read N- to C-terminus: Isocitrate dehydrogenase (NAD(+)), mitochondrial (470 aa).

The N-terminal 26 residues, 1 to 26 (MTRVERGRVLARAIERAVAHRASARR), are a transit peptide targeting the mitochondrion. NAD(+) contacts are provided by residues 138-140 (TVT) and Asn159. D-threo-isocitrate contacts are provided by residues 157 to 163 (SPNGAMR), Arg193, Tyr200, Lys275, and Asp319. Asp319 lines the Mg(2+) pocket. Residue Lys324 coordinates NAD(+). A D-threo-isocitrate-binding site is contributed by Asp343. Positions 343 and 347 each coordinate Mg(2+). NAD(+) contacts are provided by residues 380 to 385 (HGTVAD) and Asn399.

This sequence belongs to the isocitrate and isopropylmalate dehydrogenases family. In terms of assembly, forms homodimers. Mg(2+) serves as cofactor. The cofactor is Mn(2+).

The protein resides in the mitochondrion. The enzyme catalyses D-threo-isocitrate + NAD(+) = 2-oxoglutarate + CO2 + NADH. With respect to regulation, the homodimer exhibits allosteric regulation by isocitrate. Its function is as follows. Performs an essential role in the oxidative function of the tricarboxylic acid cycle and respiration. Catalyzes the decarboxylation of isocitrate to produce 2-oxoglutarate and generate NADH to provide electrons for energy production. The polypeptide is Isocitrate dehydrogenase (NAD(+)), mitochondrial (Ostreococcus tauri).